A 312-amino-acid polypeptide reads, in one-letter code: Bifunctional pinoresinol-lariciresinol reductase 2 (312 aa).

NADP(+) contacts are provided by residues 11–17 (GGTGYIG), Arg36, and Lys45. Lys138 functions as the Proton acceptor in the catalytic mechanism. An NADP(+)-binding site is contributed by Arg142. His270 contacts substrate.

It belongs to the NmrA-type oxidoreductase family. Isoflavone reductase subfamily. Dimer.

The enzyme catalyses (+)-lariciresinol + NADP(+) = (+)-pinoresinol + NADPH + H(+). It carries out the reaction (-)-secoisolariciresinol + NADP(+) = (+)-lariciresinol + NADPH + H(+). It catalyses the reaction (-)-lariciresinol + NADP(+) = (-)-pinoresinol + NADPH + H(+). In terms of biological role, reductase involved in lignan biosynthesis. Catalyzes the enantioselective sequential conversion of (+)-pinoresinol into (+)-lariciresinol and of (+)-lariciresinol into (-)-secoisolariciresinol. Can also convert with a lower efficiency (-)-pinoresinol into (-)-lariciresinol, but not (-)-lariciresinol into (+)-secoisolariciresinol. Abstracts the 4R-hydride from the NADPH cofactor during catalysis. In Thuja plicata (Western red-cedar), this protein is Bifunctional pinoresinol-lariciresinol reductase 2 (PLR_Tp2).